A 106-amino-acid polypeptide reads, in one-letter code: Iron-sulfur cluster assembly protein CyaY (106 aa).

This sequence belongs to the frataxin family.

Its function is as follows. Involved in iron-sulfur (Fe-S) cluster assembly. May act as a regulator of Fe-S biogenesis. The protein is Iron-sulfur cluster assembly protein CyaY of Escherichia coli O139:H28 (strain E24377A / ETEC).